The sequence spans 154 residues: SsrA-binding protein (154 aa).

The tract at residues 134–154 is disordered; sequence QREDLKRRAEDRDTQRELARF.

It belongs to the SmpB family.

The protein resides in the cytoplasm. In terms of biological role, required for rescue of stalled ribosomes mediated by trans-translation. Binds to transfer-messenger RNA (tmRNA), required for stable association of tmRNA with ribosomes. tmRNA and SmpB together mimic tRNA shape, replacing the anticodon stem-loop with SmpB. tmRNA is encoded by the ssrA gene; the 2 termini fold to resemble tRNA(Ala) and it encodes a 'tag peptide', a short internal open reading frame. During trans-translation Ala-aminoacylated tmRNA acts like a tRNA, entering the A-site of stalled ribosomes, displacing the stalled mRNA. The ribosome then switches to translate the ORF on the tmRNA; the nascent peptide is terminated with the 'tag peptide' encoded by the tmRNA and targeted for degradation. The ribosome is freed to recommence translation, which seems to be the essential function of trans-translation. This is SsrA-binding protein from Nitratidesulfovibrio vulgaris (strain ATCC 29579 / DSM 644 / CCUG 34227 / NCIMB 8303 / VKM B-1760 / Hildenborough) (Desulfovibrio vulgaris).